We begin with the raw amino-acid sequence, 883 residues long: Phosphoenolpyruvate carboxylase (883 aa).

Active-site residues include His138 and Lys546.

It belongs to the PEPCase type 1 family. The cofactor is Mg(2+).

The enzyme catalyses oxaloacetate + phosphate = phosphoenolpyruvate + hydrogencarbonate. In terms of biological role, forms oxaloacetate, a four-carbon dicarboxylic acid source for the tricarboxylic acid cycle. The sequence is that of Phosphoenolpyruvate carboxylase from Escherichia coli (strain 55989 / EAEC).